We begin with the raw amino-acid sequence, 171 residues long: Co-chaperone protein HscB (171 aa).

A J domain is found at 2 to 74 (DYFTLFGLPA…LMRAEYLLSL (73 aa)).

This sequence belongs to the HscB family. As to quaternary structure, interacts with HscA and stimulates its ATPase activity. Interacts with IscU.

Co-chaperone involved in the maturation of iron-sulfur cluster-containing proteins. Seems to help targeting proteins to be folded toward HscA. In Escherichia coli (strain SE11), this protein is Co-chaperone protein HscB.